A 63-amino-acid chain; its full sequence is Cecropin-A2 (63 aa).

Positions 1 to 23 are cleaved as a signal peptide; that stretch reads MNFYNIFVFVALILAITIGQSEA. Residue R62 is modified to Arginine amide.

Belongs to the cecropin family. In terms of tissue distribution, strongly expressed in larval, pupal and adult fat body and hemocytes after injection of bacteria. Maximal expression in the adult involves fat body cells of the head, thorax and abdomen.

It is found in the secreted. Its function is as follows. Cecropins have lytic and antibacterial activity against several Gram-positive and Gram-negative bacteria. This Drosophila melanogaster (Fruit fly) protein is Cecropin-A2.